A 206-amino-acid chain; its full sequence is Sperm acrosome developmental regulator (206 aa).

Residues 180–206 (RRHHVRCHAAPRPNPAQSLKLDAQSPL) form a disordered region.

In terms of tissue distribution, expressed in sperm (at protein level).

Its subcellular location is the cytoplasmic vesicle. The protein localises to the secretory vesicle. It localises to the acrosome. In terms of biological role, may play a role in acrosome formation and nucleus shaping during spermiogenesis. This is Sperm acrosome developmental regulator from Homo sapiens (Human).